The sequence spans 447 residues: GTPase Der (447 aa).

EngA-type G domains lie at 3-167 (PVIA…VQER) and 181-354 (VKIA…AAAM). GTP-binding positions include 9–16 (GRPNVGKS), 56–60 (DTGGF), 119–122 (NKAE), 187–194 (GRPNVGKS), 234–238 (DTAGL), and 299–302 (NKWD). One can recognise a KH-like domain in the interval 355 to 439 (VKLPTPQLTR…PLRIEFRTNK (85 aa)).

This sequence belongs to the TRAFAC class TrmE-Era-EngA-EngB-Septin-like GTPase superfamily. EngA (Der) GTPase family. As to quaternary structure, associates with the 50S ribosomal subunit.

Its function is as follows. GTPase that plays an essential role in the late steps of ribosome biogenesis. The polypeptide is GTPase Der (Cupriavidus taiwanensis (strain DSM 17343 / BCRC 17206 / CCUG 44338 / CIP 107171 / LMG 19424 / R1) (Ralstonia taiwanensis (strain LMG 19424))).